Consider the following 294-residue polypeptide: Undecaprenyl-diphosphatase (294 aa).

Transmembrane regions (helical) follow at residues 39-59, 93-113, 123-143, 198-218, 232-252, and 268-288; these read PGAAFTAIIQIGTELAVILYF, ATLGWNIIVGSIPIVILGFTL, NLWITVTVLLVFGVLLWVVDA, SFLMAIPAVFGSGLLETVKAV, PTLVAMVISFVLGYIVIIGFL, and IGLAVVVALLLIVGVLPAIDP.

It belongs to the UppP family.

It localises to the cell membrane. It carries out the reaction di-trans,octa-cis-undecaprenyl diphosphate + H2O = di-trans,octa-cis-undecaprenyl phosphate + phosphate + H(+). Functionally, catalyzes the dephosphorylation of undecaprenyl diphosphate (UPP). Confers resistance to bacitracin. This Bifidobacterium longum subsp. infantis (strain ATCC 15697 / DSM 20088 / JCM 1222 / NCTC 11817 / S12) protein is Undecaprenyl-diphosphatase.